The primary structure comprises 114 residues: uncharacterized protein (114 aa).

2 consecutive transmembrane segments (helical) span residues 58–78 (CLLGVGAVGTFISTFPQFFLL) and 94–114 (SISYAASAIFSFSIFFFFCLA).

It is found in the membrane. This is an uncharacterized protein from Saccharomyces cerevisiae (strain ATCC 204508 / S288c) (Baker's yeast).